We begin with the raw amino-acid sequence, 507 residues long: Xylose import ATP-binding protein XylG (507 aa).

ABC transporter domains lie at 5–242 (LKMT…VGRE) and 259–504 (LEVK…LSEK). Residue 37-44 (GENGSGKS) coordinates ATP.

It belongs to the ABC transporter superfamily. Xylose importer (TC 3.A.1.2.4) family. As to quaternary structure, the complex is composed of two ATP-binding proteins (XylG), two transmembrane proteins (XylH) and a solute-binding protein (XylF).

Its subcellular location is the cell inner membrane. It catalyses the reaction D-xylose(out) + ATP + H2O = D-xylose(in) + ADP + phosphate + H(+). Part of the ABC transporter complex XylFGH involved in xylose import. Responsible for energy coupling to the transport system. The sequence is that of Xylose import ATP-binding protein XylG from Photobacterium profundum (strain SS9).